Here is a 120-residue protein sequence, read N- to C-terminus: Large ribosomal subunit protein uL18 (120 aa).

Residues 1–22 (MKVDRKTATHRRHQRIRRKIAG) form a disordered region. The span at 8-20 (ATHRRHQRIRRKI) shows a compositional bias: basic residues.

This sequence belongs to the universal ribosomal protein uL18 family. Part of the 50S ribosomal subunit; part of the 5S rRNA/L5/L18/L25 subcomplex. Contacts the 5S and 23S rRNAs.

Its function is as follows. This is one of the proteins that bind and probably mediate the attachment of the 5S RNA into the large ribosomal subunit, where it forms part of the central protuberance. The sequence is that of Large ribosomal subunit protein uL18 from Gloeobacter violaceus (strain ATCC 29082 / PCC 7421).